The primary structure comprises 151 residues: FUN14 domain-containing protein 1 (151 aa).

The YXXL motif lies at 14-17 (YEVL). 3 consecutive transmembrane segments (helical) span residues 44 to 64 (YSVA…GFLF), 71 to 91 (AATA…GGYI), and 130 to 150 (FIKK…LGLA).

It belongs to the FUN14 family.

It is found in the mitochondrion outer membrane. Acts as an activator of hypoxia-induced mitophagy, an important mechanism for mitochondrial quality control. The protein is FUN14 domain-containing protein 1 (fundc1) of Xenopus tropicalis (Western clawed frog).